The primary structure comprises 391 residues: Pyruvate dehydrogenase E1 component subunit alpha type II, mitochondrial (391 aa).

The N-terminal 17 residues, 1–17 (SNIFKGPTVGSSVVAMS), are a transit peptide targeting the mitochondrion. Residues histidine 83, tyrosine 109, arginine 110, glycine 148, glycine 156, valine 158, aspartate 187, glycine 188, alanine 189, asparagine 216, and tyrosine 218 each contribute to the pyruvate site. Thiamine diphosphate-binding residues include tyrosine 109 and arginine 110. Thiamine diphosphate-binding residues include glycine 156, valine 158, aspartate 187, glycine 188, alanine 189, and asparagine 216. Residue aspartate 187 coordinates Mg(2+). Residues asparagine 216 and tyrosine 218 each coordinate Mg(2+). Position 283 (histidine 283) interacts with thiamine diphosphate. A phosphoserine mark is found at serine 284 and serine 291.

Heterotetramer of two PDHA2 and two PDHB subunits. The heterotetramer interacts with DLAT, and is part of the multimeric pyruvate dehydrogenase complex that contains multiple copies of pyruvate dehydrogenase (E1), dihydrolipoamide acetyltransferase (DLAT, E2) and lipoamide dehydrogenase (DLD, E3). The cofactor is thiamine diphosphate. Mg(2+) serves as cofactor.

It localises to the mitochondrion matrix. It carries out the reaction N(6)-[(R)-lipoyl]-L-lysyl-[protein] + pyruvate + H(+) = N(6)-[(R)-S(8)-acetyldihydrolipoyl]-L-lysyl-[protein] + CO2. With respect to regulation, pyruvate dehydrogenase activity is inhibited by phosphorylation of PDHA2; it is reactivated by dephosphorylation. Functionally, the pyruvate dehydrogenase complex catalyzes the overall conversion of pyruvate to acetyl-CoA and CO(2), and thereby links the glycolytic pathway to the tricarboxylic cycle. The protein is Pyruvate dehydrogenase E1 component subunit alpha type II, mitochondrial of Ascaris suum (Pig roundworm).